Here is a 376-residue protein sequence, read N- to C-terminus: Dihydroorotate dehydrogenase (quinone) (376 aa).

Residues 78–82 and T102 contribute to the FMN site; that span reads AGFDK. Position 82 (K82) interacts with substrate. 127-131 provides a ligand contact to substrate; sequence NRMGF. FMN-binding residues include N157 and N190. N190 is a binding site for substrate. The active-site Nucleophile is the S193. Residue N195 coordinates substrate. Positions 228 and 256 each coordinate FMN. A substrate-binding site is contributed by 257–258; that stretch reads NT. FMN contacts are provided by residues G286, G315, and 336–337; that span reads YT.

This sequence belongs to the dihydroorotate dehydrogenase family. Type 2 subfamily. As to quaternary structure, monomer. FMN is required as a cofactor.

It localises to the cell membrane. The catalysed reaction is (S)-dihydroorotate + a quinone = orotate + a quinol. Its pathway is pyrimidine metabolism; UMP biosynthesis via de novo pathway; orotate from (S)-dihydroorotate (quinone route): step 1/1. Functionally, catalyzes the conversion of dihydroorotate to orotate with quinone as electron acceptor. The sequence is that of Dihydroorotate dehydrogenase (quinone) from Trichormus variabilis (strain ATCC 29413 / PCC 7937) (Anabaena variabilis).